Here is a 478-residue protein sequence, read N- to C-terminus: Aspartate ammonia-lyase (478 aa).

Positions 104, 143, 144, 145, and 190 each coordinate L-aspartate. Residues Gly-320 to Asn-329 are SS loop. Catalysis depends on Ser-321, which acts as the Proton acceptor. Positions 322 and 327 each coordinate L-aspartate.

The protein belongs to the class-II fumarase/aspartase family. Aspartase subfamily. As to quaternary structure, homotetramer.

It carries out the reaction L-aspartate = fumarate + NH4(+). In terms of biological role, catalyzes the reversible conversion of L-aspartate to fumarate and ammonia. The protein is Aspartate ammonia-lyase (aspA) of Escherichia coli O157:H7.